A 296-amino-acid polypeptide reads, in one-letter code: Large ribosomal subunit protein uL18A (296 aa).

The disordered stretch occupies residues 251-296; it reads PVHEKKPKKEVKKKRWNRAKLSLEQKKDRVAQKKASFLRAQEKADS. Positions 255 to 268 are enriched in basic residues; sequence KKPKKEVKKKRWNR. Positions 271–281 are enriched in basic and acidic residues; that stretch reads LSLEQKKDRVA.

This sequence belongs to the universal ribosomal protein uL18 family. Component of the large ribosomal subunit (LSU). Part of a LSU subcomplex, the 5S RNP which is composed of the 5S RNA, RPL5 and RPL11.

It is found in the cytoplasm. Its subcellular location is the nucleus. The protein resides in the nucleolus. Functionally, component of the ribosome, a large ribonucleoprotein complex responsible for the synthesis of proteins in the cell. The small ribosomal subunit (SSU) binds messenger RNAs (mRNAs) and translates the encoded message by selecting cognate aminoacyl-transfer RNA (tRNA) molecules. The large subunit (LSU) contains the ribosomal catalytic site termed the peptidyl transferase center (PTC), which catalyzes the formation of peptide bonds, thereby polymerizing the amino acids delivered by tRNAs into a polypeptide chain. The nascent polypeptides leave the ribosome through a tunnel in the LSU and interact with protein factors that function in enzymatic processing, targeting, and the membrane insertion of nascent chains at the exit of the ribosomal tunnel. As part of the 5S RNP/5S ribonucleoprotein particle it is an essential component of the LSU, required for its formation and the maturation of rRNAs. It also couples ribosome biogenesis to p53/TP53 activation. As part of the 5S RNP it accumulates in the nucleoplasm and inhibits MDM2, when ribosome biogenesis is perturbed, mediating the stabilization and the activation of TP53. The chain is Large ribosomal subunit protein uL18A (rpl5-a) from Xenopus laevis (African clawed frog).